Here is a 380-residue protein sequence, read N- to C-terminus: Cytochrome b (380 aa).

Helical transmembrane passes span 34-54, 78-99, 114-134, and 179-199; these read FGSL…LLAM, WLIR…YLHI, WNTG…GYVL, and FFAL…IHLT. Residues histidine 84 and histidine 98 each coordinate heme b. Heme b contacts are provided by histidine 183 and histidine 197. Histidine 202 provides a ligand contact to a ubiquinone. Transmembrane regions (helical) follow at residues 227 to 247, 289 to 309, 321 to 341, and 348 to 368; these read LKDI…ALFS, LGGV…PFLH, LSQL…WVGS, and FIII…ILFP.

This sequence belongs to the cytochrome b family. The cytochrome bc1 complex contains 11 subunits: 3 respiratory subunits (MT-CYB, CYC1 and UQCRFS1), 2 core proteins (UQCRC1 and UQCRC2) and 6 low-molecular weight proteins (UQCRH/QCR6, UQCRB/QCR7, UQCRQ/QCR8, UQCR10/QCR9, UQCR11/QCR10 and a cleavage product of UQCRFS1). This cytochrome bc1 complex then forms a dimer. The cofactor is heme b.

Its subcellular location is the mitochondrion inner membrane. In terms of biological role, component of the ubiquinol-cytochrome c reductase complex (complex III or cytochrome b-c1 complex) that is part of the mitochondrial respiratory chain. The b-c1 complex mediates electron transfer from ubiquinol to cytochrome c. Contributes to the generation of a proton gradient across the mitochondrial membrane that is then used for ATP synthesis. This chain is Cytochrome b (MT-CYB), found in Macronectes halli (Hall's giant petrel).